A 391-amino-acid polypeptide reads, in one-letter code: Arsenite methyltransferase (391 aa).

The interval 1–126 (MELWTHPTPA…TMVADRDPEE (126 aa)) is disordered. Positions 28-39 (CSQPWATTPGTN) are enriched in polar residues. Positions 40–65 (SSDASRTPTTASASATSKPQSASARA) are enriched in low complexity. The segment covering 102-116 (KRSTTCEATMSNDNE) has biased composition (polar residues).

The protein belongs to the methyltransferase superfamily. Arsenite methyltransferase family.

It carries out the reaction arsenic triglutathione + [thioredoxin]-dithiol + S-adenosyl-L-methionine + 2 H2O = methylarsonous acid + [thioredoxin]-disulfide + 3 glutathione + S-adenosyl-L-homocysteine + H(+). It catalyses the reaction arsenic triglutathione + 2 [thioredoxin]-dithiol + 2 S-adenosyl-L-methionine + H2O = dimethylarsinous acid + 2 [thioredoxin]-disulfide + 3 glutathione + 2 S-adenosyl-L-homocysteine + 2 H(+). The enzyme catalyses arsenic triglutathione + 3 [thioredoxin]-dithiol + 3 S-adenosyl-L-methionine = trimethylarsine + 3 [thioredoxin]-disulfide + 3 glutathione + 3 S-adenosyl-L-homocysteine + 3 H(+). In terms of biological role, catalyzes the transfer of a methyl group from AdoMet to arsenite, producing methylated arsenicals. The protein is Arsenite methyltransferase of Halobacterium salinarum (strain ATCC 700922 / JCM 11081 / NRC-1) (Halobacterium halobium).